Here is a 122-residue protein sequence, read N- to C-terminus: UPF0382 membrane protein SE_0353 (122 aa).

Helical transmembrane passes span valine 3–alanine 23, methionine 46–valine 66, alanine 69–leucine 89, and isoleucine 98–leucine 118.

The protein belongs to the UPF0382 family.

The protein localises to the cell membrane. The polypeptide is UPF0382 membrane protein SE_0353 (Staphylococcus epidermidis (strain ATCC 12228 / FDA PCI 1200)).